Here is a 94-residue protein sequence, read N- to C-terminus: MNDRKRAVQARVYGRVQGVGYRIWTRSEAAGLGLVGWVRNERDGSVTAWLAGADAAVSAMIERLRQGPAGASVSRVEVEEIETWTAPGDFRIVA.

The Acylphosphatase-like domain occupies 7 to 94 (AVQARVYGRV…TAPGDFRIVA (88 aa)). Active-site residues include R22 and N40.

The protein belongs to the acylphosphatase family.

It carries out the reaction an acyl phosphate + H2O = a carboxylate + phosphate + H(+). This chain is Acylphosphatase (acyP), found in Mesorhizobium japonicum (strain LMG 29417 / CECT 9101 / MAFF 303099) (Mesorhizobium loti (strain MAFF 303099)).